Here is a 321-residue protein sequence, read N- to C-terminus: DNA packaging protein (321 aa).

The segment at 1–196 is ATPase; it reads MLSYDRILNF…DERRKTKFGQ (196 aa). 13-20 serves as a coordination point for ATP; it reads GARGIGKS. The DNA-binding stretch occupies residues 222 to 321; sequence KRSKNSKFVF…YEMFKKMRVQ (100 aa).

It belongs to the phi29likevirus gp16 family. As to quaternary structure, homopentamer. Interacts with the packaging RNA (pRNA). Part of a DNA-gp3-gp16 complex.

It catalyses the reaction ATP + H2O = ADP + phosphate + H(+). Its function is as follows. ATPase required for the genome encapsidation reaction. Part of the active packaging motor via the binding to the packaging RNA (pRNA), itself fixed to the head-tail connector at the unique portal vertex of the prohead. Binds and supercoils the pre-formed, unit-length DNA bound to gp3 to produce an initiation complex for DNA packaging. Provides the energy to actively pump the viral DNA into the prohead. Approximately one molecule of ATP is used in the packaging of 2 bp of viral DNA. ATP hydrolysis results in a conformational change that causes the arginine/lysine finger of one subunit to move into the active site of its neighbor, where it interacts with the negatively charged oxygens on the gamma-phosphate of ATP. After packaging, the ATPase and the pRNA are released from the prohead. This is DNA packaging protein (16) from Bacillus subtilis (Bacteriophage B103).